The primary structure comprises 488 residues: Multidrug resistance outer membrane protein MdtP (488 aa).

The first 23 residues, 1–23, serve as a signal peptide directing secretion; sequence MINRQLSRLLLCSILGSTTLISG. A lipid anchor (N-palmitoyl cysteine) is attached at C24. C24 carries the S-diacylglycerol cysteine lipid modification.

It belongs to the outer membrane factor (OMF) (TC 1.B.17) family. In terms of assembly, could be part of a tripartite efflux system composed of MdtN, MdtO and MdtP.

Its subcellular location is the cell outer membrane. In terms of biological role, could be involved in resistance to puromycin, acriflavine and tetraphenylarsonium chloride. This chain is Multidrug resistance outer membrane protein MdtP (mdtP), found in Shigella flexneri.